We begin with the raw amino-acid sequence, 335 residues long: Tryptophan--tRNA ligase (335 aa).

ATP-binding positions include 9–11 and 17–18; these read QST and GN. The short motif at 10-18 is the 'HIGH' region element; that stretch reads STNSLTLGN. An L-tryptophan-binding site is contributed by aspartate 137. ATP contacts are provided by residues 149-151, isoleucine 189, and 198-202; these read GKD and KMSKS. Residues 198-202 carry the 'KMSKS' region motif; sequence KMSKS.

The protein belongs to the class-I aminoacyl-tRNA synthetase family. Homodimer.

It localises to the cytoplasm. It carries out the reaction tRNA(Trp) + L-tryptophan + ATP = L-tryptophyl-tRNA(Trp) + AMP + diphosphate + H(+). Functionally, catalyzes the attachment of tryptophan to tRNA(Trp). This is Tryptophan--tRNA ligase from Malacoplasma penetrans (strain HF-2) (Mycoplasma penetrans).